Here is a 149-residue protein sequence, read N- to C-terminus: Large ribosomal subunit protein bL9 (149 aa).

Belongs to the bacterial ribosomal protein bL9 family.

Its function is as follows. Binds to the 23S rRNA. This chain is Large ribosomal subunit protein bL9, found in Clostridioides difficile (strain 630) (Peptoclostridium difficile).